The chain runs to 218 residues: Probable GTP-binding protein EngB (218 aa).

Residues 31–205 (SGIEIAFAGR…EQKVTSWYAQ (175 aa)) form the EngB-type G domain. GTP is bound by residues 39–46 (GRSNAGKS), 66–70 (GRTQL), 84–87 (DLPG), 151–154 (TKAD), and 184–186 (FSS). Ser46 and Thr68 together coordinate Mg(2+).

Belongs to the TRAFAC class TrmE-Era-EngA-EngB-Septin-like GTPase superfamily. EngB GTPase family. Mg(2+) serves as cofactor.

Necessary for normal cell division and for the maintenance of normal septation. The polypeptide is Probable GTP-binding protein EngB (Psychromonas ingrahamii (strain DSM 17664 / CCUG 51855 / 37)).